A 544-amino-acid chain; its full sequence is NAD(P)H-quinone oxidoreductase chain 4 (544 aa).

14 helical membrane passes run 29 to 49 (FPWL…IPLV), 60 to 80 (WYAL…YLNG), 115 to 135 (LILL…PVTF), 139 to 159 (LFFF…AVQD), 161 to 181 (LLFF…LAIW), 193 to 213 (FILY…AMAF), 234 to 254 (GFQA…LPIV), 268 to 288 (TAPV…YALF), 302 to 322 (FAPL…LTSF), 339 to 359 (MGFV…GAML), 360 to 380 (QMIS…ATYD), 400 to 422 (MFAM…GFVS), 442 to 462 (IVID…LLSM), and 488 to 508 (IYII…PKLV).

The protein belongs to the complex I subunit 4 family.

The protein localises to the cellular thylakoid membrane. It carries out the reaction a plastoquinone + NADH + (n+1) H(+)(in) = a plastoquinol + NAD(+) + n H(+)(out). The enzyme catalyses a plastoquinone + NADPH + (n+1) H(+)(in) = a plastoquinol + NADP(+) + n H(+)(out). Its function is as follows. NDH-1 shuttles electrons from NAD(P)H, via FMN and iron-sulfur (Fe-S) centers, to quinones in the respiratory chain. The immediate electron acceptor for the enzyme in this species is believed to be plastoquinone. Couples the redox reaction to proton translocation (for every two electrons transferred, four hydrogen ions are translocated across the cytoplasmic membrane), and thus conserves the redox energy in a proton gradient. In Synechococcus sp. (strain RCC307), this protein is NAD(P)H-quinone oxidoreductase chain 4.